The sequence spans 120 residues: Large ribosomal subunit protein uL18 (120 aa).

It belongs to the universal ribosomal protein uL18 family. In terms of assembly, part of the 50S ribosomal subunit; part of the 5S rRNA/L5/L18/L25 subcomplex. Contacts the 5S and 23S rRNAs.

In terms of biological role, this is one of the proteins that bind and probably mediate the attachment of the 5S RNA into the large ribosomal subunit, where it forms part of the central protuberance. The protein is Large ribosomal subunit protein uL18 of Herminiimonas arsenicoxydans.